The following is a 326-amino-acid chain: D-amino-acid oxidase (326 aa).

The FAD site is built by Gly18, Val19, Thr46, Thr47, Ser48, Ala52, Ala53, Val162, and Ser179. 2 residues coordinate D-proline: Tyr222 and Arg277. 2 residues coordinate D-serine: Tyr222 and Arg277. Positions 277, 303, 304, 306, and 308 each coordinate FAD. Residue Gly304 participates in D-proline binding. Gly304 provides a ligand contact to D-serine.

The protein belongs to the DAMOX/DASOX family. As to quaternary structure, monomer. Requires FAD as cofactor.

Its subcellular location is the cytoplasm. The protein localises to the secreted. The protein resides in the cell wall. It catalyses the reaction a D-alpha-amino acid + O2 + H2O = a 2-oxocarboxylate + H2O2 + NH4(+). The enzyme catalyses D-valine + O2 + H2O = 3-methyl-2-oxobutanoate + H2O2 + NH4(+). The catalysed reaction is D-leucine + O2 + H2O = 4-methyl-2-oxopentanoate + H2O2 + NH4(+). It carries out the reaction D-isoleucine + O2 + H2O = (R)-3-methyl-2-oxopentanoate + H2O2 + NH4(+). It catalyses the reaction D-tyrosine + O2 + H2O = 3-(4-hydroxyphenyl)pyruvate + H2O2 + NH4(+). The enzyme catalyses D-threonine + O2 + H2O = (S)-3-hydroxy-2-oxobutanoate + H2O2 + NH4(+). Inhibited by benzoate and phenylmethylsulfonyl fluoride (PMSF). Weakly inhibited by anthranilate, crotonate, and the amino acid-modifying agents dithionitrobenzoic acid and diethyl pyrocarbonate. Not inhibited by malonate, meso-tartrate, D-malate, or the amino acid-modifying agents iodoacetic acid or butane-2,3-dione. In terms of biological role, catalyzes the oxidative deamination of D-amino acids with broad substrate specificity. The polypeptide is D-amino-acid oxidase (Rubrobacter xylanophilus (strain DSM 9941 / JCM 11954 / NBRC 16129 / PRD-1)).